We begin with the raw amino-acid sequence, 332 residues long: Alpha-N-acetylgalactosaminide alpha-2,6-sialyltransferase 6 (332 aa).

Positions 1 to 26 (MACPRPLSQCDHTPLPGPPAGHWPLP) are disordered. The Cytoplasmic portion of the chain corresponds to 1–42 (MACPRPLSQCDHTPLPGPPAGHWPLPLSRRRREMKSNKEQRS). The helical; Signal-anchor for type II membrane protein transmembrane segment at 43-63 (AVFVILFALITILILYSSSSA) threads the bilayer. Over 64–332 (NEVFHYGSLR…GITFSHPSWT (269 aa)) the chain is Lumenal. An N-linked (GlcNAc...) asparagine glycan is attached at Asn97. Cys107 and Cys255 are oxidised to a cystine.

Belongs to the glycosyltransferase 29 family.

The protein resides in the golgi apparatus membrane. It catalyses the reaction a ganglioside GM1b (d18:1(4E)) + CMP-N-acetyl-beta-neuraminate = a ganglioside GD1alpha (d18:1(4E)) + CMP + H(+). The enzyme catalyses N-acetyl-alpha-neuraminosyl-(2-&gt;3)-beta-D-galactosyl-(1-&gt;3)-N-acetyl-beta-D-glucosaminyl-(1-&gt;3)-beta-D-galactosyl-(1-&gt;4)-beta-D-glucosyl-(1&lt;-&gt;1')-N-acyl-sphing-4-enine + CMP-N-acetyl-beta-neuraminate = N-acetyl-alpha-neuraminosyl-(2-&gt;3)-beta-D-galactosyl-(1-&gt;3)-[N-acetyl-alpha-neuraminosyl-(2-&gt;6)]-N-acetyl-beta-D-glucosaminyl-(1-&gt;3)-beta-D-galactosyl-(1-&gt;4)-beta-D-glucosyl-(1&lt;-&gt;1')-N-acyl-sphing-4-enine + CMP + H(+). The catalysed reaction is a globoside MSGG + CMP-N-acetyl-beta-neuraminate = a globoside DSGG + CMP + H(+). It carries out the reaction a ganglioside GD1a (d18:1(4E)) + CMP-N-acetyl-beta-neuraminate = a ganglioside GT1aalpha (d18:1(4E)) + CMP + H(+). It catalyses the reaction a ganglioside GT1b (d18:1(4E)) + CMP-N-acetyl-beta-neuraminate = a ganglioside GQ1balpha (d18:1(4E)) + CMP + H(+). The enzyme catalyses 3-O-[alpha-Neu5Ac-(2-&gt;3)-beta-D-Gal-(1-&gt;3)-alpha-D-GalNAc]-L-Ser-[protein] + CMP-N-acetyl-beta-neuraminate = a 3-O-{alpha-Neu5Ac-(2-&gt;3)-beta-D-Gal-(1-&gt;3)-[alpha-Neu5Ac-(2-&gt;6)]-alpha-D-GalNAc}-L-seryl-[protein] + CMP + H(+). The catalysed reaction is 3-O-[alpha-Neu5Ac-(2-&gt;3)-beta-D-Gal-(1-&gt;3)-alpha-D-GalNAc]-L-Thr-[protein] + CMP-N-acetyl-beta-neuraminate = a 3-O-{alpha-Neu5Ac-(2-&gt;3)-beta-D-Gal-(1-&gt;3)-[alpha-Neu5Ac-(2-&gt;6)]-alpha-D-GalNAc}-L-threonyl-[protein] + CMP + H(+). In terms of biological role, transfers the sialyl group (N-acetyl-alpha-neuraminyl or NeuAc) from CMP-NeuAc onto glycoproteins and glycolipids, forming an alpha-2,6-linkage. Produces branched type disialyl structures by transfer of a sialyl group onto the GalNAc or GlcNAc residue inside backbone core chains having a terminal sialic acid with an alpha-2,3-linkage on Gal. ST6GalNAcVI prefers glycolipids to glycoproteins, predominantly catalyzing the biosynthesis of ganglioside GD1alpha from GM1b. Besides GMb1, MSGG and other glycolipids, it shows activity towards sialyl Lc4Cer generating disialyl Lc4Cer, which can lead to the synthesis of disialyl Lewis a (Le(a)), suggested to be a cancer-associated antigen. Also has activity toward GD1a and GT1b, and can generate DSGG (disialylgalactosylgloboside) from MSGG (monosialylgalactosylgloboside). In Bos taurus (Bovine), this protein is Alpha-N-acetylgalactosaminide alpha-2,6-sialyltransferase 6 (ST6GALNAC6).